Consider the following 252-residue polypeptide: Agamous-like MADS-box protein AGL6 (252 aa).

The region spanning 3-57 (RGRVEMKRIENKINRQVTFSKRRNGLLKKAYELSVLCDAEVALIIFSSRGKLYEF) is the MADS-box domain. Positions 86 to 176 (TQSWCQEVTK…KIKFETEGHA (91 aa)) constitute a K-box domain. Positions 91-173 (QEVTKLKSKY…KQLKIKFETE (83 aa)) form a coiled coil.

Forms a heterodimer with AGAMOUS. Interacts with AGL15 and AGL16. In terms of tissue distribution, preferentially expressed in flowers.

The protein localises to the nucleus. Its function is as follows. Probable transcription factor. Forms a heterodimer via the K-box domain with AG, that could be involved in genes regulation during floral meristem development. This chain is Agamous-like MADS-box protein AGL6 (AGL6), found in Arabidopsis thaliana (Mouse-ear cress).